Consider the following 186-residue polypeptide: dCTP deaminase (186 aa).

107-112 contacts dCTP; it reads KSTYAR. E133 serves as the catalytic Proton donor/acceptor. DCTP contacts are provided by Q152, Y166, and Q176.

This sequence belongs to the dCTP deaminase family. In terms of assembly, homotrimer.

It catalyses the reaction dCTP + H2O + H(+) = dUTP + NH4(+). It participates in pyrimidine metabolism; dUMP biosynthesis; dUMP from dCTP (dUTP route): step 1/2. Functionally, catalyzes the deamination of dCTP to dUTP. In Campylobacter lari (strain RM2100 / D67 / ATCC BAA-1060), this protein is dCTP deaminase.